The following is a 902-amino-acid chain: 4-hydroxyphenylacetate decarboxylase glycyl radical subunit (902 aa).

The PFL domain occupies 38–774 (KRAEDLLDVY…ATLATPDGRL (737 aa)). Positions 348 and 507 each coordinate 4-hydroxyphenylacetate. Cys507 (cysteine radical intermediate) is an active-site residue. Glu509 functions as the Proton donor in the catalytic mechanism. 4-hydroxyphenylacetate-binding residues include His540 and Glu641. A Glycine radical domain is found at 782–902 (GSVSAYAGTD…VIARTEYEGV (121 aa)). Gly877 carries the glycine radical modification.

Belongs to the glycyl radical enzyme (GRE) family. HPAD subfamily. In terms of assembly, heterooctamer consisting of 4 large (HpdB) subunits and 4 small (HpdC) subunits, arranged as a tetramer of heterodimers. Also forms a catalytically inactive homodimer. In terms of processing, requires the activating protein CsdA to generate the key active site glycyl radical that is involved in catalysis. Post-translationally, phosphorylated on serine. Phosphorylation may trigger the formation of the active heterooctamers and thereby regulates enzyme activity.

The catalysed reaction is 4-hydroxyphenylacetate + H(+) = 4-methylphenol + CO2. It catalyses the reaction 3,4-dihydroxyphenylacetate + H(+) = 4-methylcatechol + CO2. Glycyl radical subunit of the HPA decarboxylase that decarboxylates phenylacetates with a hydroxyl group in the p-position. Active toward 4-hydroxyphenylacetate and 3,4-dihydroxyphenylacetate, forming 4-methylphenol and 4-methylcatechol, respectively. Is likely involved in the catabolism of aromatic amino acids such as tyrosine fermentation. 4-methylphenol (p-cresol) formation provides metabolic toxicity, which allows an active suppression of other microbes and may provide growth advantages for the producers in highly competitive environments. The large subunit is the catalytic subunit that binds the substrate. The chain is 4-hydroxyphenylacetate decarboxylase glycyl radical subunit from Clostridioides difficile (strain CD196) (Peptoclostridium difficile).